A 37-amino-acid chain; its full sequence is Large ribosomal subunit protein bL36 (37 aa).

Belongs to the bacterial ribosomal protein bL36 family.

The sequence is that of Large ribosomal subunit protein bL36 from Metamycoplasma arthritidis (strain 158L3-1) (Mycoplasma arthritidis).